Consider the following 211-residue polypeptide: 2,3-bisphosphoglycerate-dependent phosphoglycerate mutase (211 aa).

Substrate-binding positions include 9-16 (RHGQSDWN), 22-23 (TG), R61, 88-91 (ERDY), K99, 115-116 (RR), and 159-160 (GN). Catalysis depends on H10, which acts as the Tele-phosphohistidine intermediate. The Proton donor/acceptor role is filled by E88.

This sequence belongs to the phosphoglycerate mutase family. BPG-dependent PGAM subfamily. In terms of assembly, homodimer.

The enzyme catalyses (2R)-2-phosphoglycerate = (2R)-3-phosphoglycerate. Its pathway is carbohydrate degradation; glycolysis; pyruvate from D-glyceraldehyde 3-phosphate: step 3/5. Its function is as follows. Catalyzes the interconversion of 2-phosphoglycerate and 3-phosphoglycerate. The protein is 2,3-bisphosphoglycerate-dependent phosphoglycerate mutase of Rhizobium johnstonii (strain DSM 114642 / LMG 32736 / 3841) (Rhizobium leguminosarum bv. viciae).